We begin with the raw amino-acid sequence, 479 residues long: Baeyer-Villiger monooxygenase AacuH (479 aa).

The disordered stretch occupies residues 14–34; it reads DSLGHPDGASRPPVSAESLSR.

This sequence belongs to the AflY oxidoreductase family.

It participates in secondary metabolite biosynthesis. Its function is as follows. Baeyer-Villiger monooxygenase; part of the gene cluster that mediates the biosynthesis of the tetrahydroxanthone dimer secalonic acid D. The pathway begins with the synthesis of atrochrysone thioester by the polyketide synthase AacuL. The atrochrysone carboxyl ACP thioesterase AacuM then breaks the thioester bond and releases the atrochrysone carboxylic acid from AacuL. Atrochrysone carboxylic acid is decarboxylated by the decarboxylase AacuI, and oxidized by the anthrone oxygenase AacuG to yield emodin. Emodin is then reduced to emodin hydroquinone by a yet unidentified oxidoreductase. A-ring reduction by the short chain dehydrogenase AacuN, dehydration by the scytalone dehydratase-like protein AacuK and probable spontaneous re-oxidation, results in overall deoxygenation to chrysophanol. Baeyer-Villiger oxidation by the Baeyer-Villiger monooxygenase (BVMO) AacuH then yields monodictyphenone. Monodictyphenone is transformed into compounds with the tetrahydroxanthone skeleton via methylesterification by the methyltransferase AacuQ, followed by the action of the flavin-dependent monooxygenase AacuC, the isomerase AacuP, and the short chain dehydrogenase/reductase AacuF or AacuD. AacuF and AacuD should accept the same compound as a substrate but perform the ketoreduction with a different stereoselectivity, thus yielding blennolides B and A, respectively. In the final step of the biosynthesis, the cytochrome P450 monooxygenase AacuE accepts blennolide B and/or blennolide A to conduct the dimerization reaction to furnish the tetrahydroxanthone dimers, secalonic acids D, B, and F. The chain is Baeyer-Villiger monooxygenase AacuH from Aspergillus aculeatus (strain ATCC 16872 / CBS 172.66 / WB 5094).